We begin with the raw amino-acid sequence, 583 residues long: Complement factor I (583 aa).

A signal peptide spans 1–18 (MKLLHVFLLFLCFHLSFC). Cystine bridges form between Cys33/Cys255, Cys43/Cys54, Cys48/Cys59, Cys61/Cys93, Cys67/Cys86, Cys75/Cys106, Cys141/Cys181, Cys154/Cys214, Cys186/Cys196, Cys229/Cys247, Cys259/Cys271, Cys266/Cys284, Cys278/Cys293, Cys327/Cys453, Cys365/Cys381, and Cys373/Cys444. The 54-residue stretch at 55–108 (IEGTCICKLPYQCPKNGTTVCATNGRSFPTYCQQKSLECLRPGTKFLNNGTCTA) folds into the Kazal-like domain. N-linked (GlcNAc...) asparagine glycosylation is found at Asn70, Asn103, Asn173, and Asn177. In terms of domain architecture, SRCR spans 114-212 (VSLKHGNTDS…TMGYQDLADV (99 aa)). LDL-receptor class A domains lie at 213–257 (VCYT…LCCK) and 258–294 (ACQG…VGCE). Ca(2+) is bound by residues Lys239, Asp242, Ile244, Asp246, Asp252, and Glu253. Tyr276, Asn279, Glu281, Asp283, Asp289, and Glu290 together coordinate Ca(2+). The region spanning 340 to 574 (IVGGKRAQLG…YFDWISYHVG (235 aa)) is the Peptidase S1 domain. Active-site charge relay system residues include His380 and Asp429. Residues Asn464 and Asn494 are each glycosylated (N-linked (GlcNAc...) asparagine). Disulfide bonds link Cys467–Cys531, Cys495–Cys510, and Cys521–Cys550. The Charge relay system role is filled by Ser525. Asn536 carries an N-linked (GlcNAc...) asparagine glycan.

Belongs to the peptidase S1 family. In terms of assembly, heterodimer of a light and heavy chains; disulfide-linked. The fully processed and mature protein circulates as a zymogen, and is allosterically activated by substrate-induced remodeling of the active site. Plasma.

The protein localises to the secreted. Its subcellular location is the extracellular space. It catalyses the reaction Inactivates complement subcomponents C3b, iC3b and C4b by proteolytic cleavage.. In terms of biological role, responsible for cleaving the alpha-chains of C4b and C3b in the presence of the cofactors C4-binding protein and factor H respectively. The polypeptide is Complement factor I (CFI) (Pongo abelii (Sumatran orangutan)).